The following is a 264-amino-acid chain: Regulatory protein RecX (264 aa).

Belongs to the RecX family.

The protein resides in the cytoplasm. Its function is as follows. Negatively modulates RecA activity. The polypeptide is Regulatory protein RecX (Bacillus subtilis (strain 168)).